Here is a 225-residue protein sequence, read N- to C-terminus: Peptidyl-tRNA hydrolase (225 aa).

Position 14 (Tyr14) interacts with tRNA. His19 functions as the Proton acceptor in the catalytic mechanism. TRNA is bound by residues Phe64, Asn66, and Asn112. Residues 184–225 (ALRMQPPKPEKPKPAAKAPEAQAPEAAPDARSALQKLADRFR) are disordered. The span at 198-210 (AAKAPEAQAPEAA) shows a compositional bias: low complexity.

It belongs to the PTH family. As to quaternary structure, monomer.

It localises to the cytoplasm. The catalysed reaction is an N-acyl-L-alpha-aminoacyl-tRNA + H2O = an N-acyl-L-amino acid + a tRNA + H(+). Functionally, hydrolyzes ribosome-free peptidyl-tRNAs (with 1 or more amino acids incorporated), which drop off the ribosome during protein synthesis, or as a result of ribosome stalling. Its function is as follows. Catalyzes the release of premature peptidyl moieties from peptidyl-tRNA molecules trapped in stalled 50S ribosomal subunits, and thus maintains levels of free tRNAs and 50S ribosomes. In Cereibacter sphaeroides (strain KD131 / KCTC 12085) (Rhodobacter sphaeroides), this protein is Peptidyl-tRNA hydrolase.